A 472-amino-acid chain; its full sequence is 23S rRNA (uracil(1939)-C(5))-methyltransferase RlmD (472 aa).

The span at 1–15 shows a compositional bias: basic residues; that stretch reads MSRTAPHRRAPKRYK. The segment at 1–23 is disordered; it reads MSRTAPHRRAPKRYKTPPPAPAH. A TRAM domain is found at 23–87; sequence HVVTGNEPVI…PKFEQAEVVQ (65 aa). Positions 100, 106, 109, and 188 each coordinate [4Fe-4S] cluster. The S-adenosyl-L-methionine site is built by Q296, F325, N330, E346, N374, and D395. C428 acts as the Nucleophile in catalysis.

Belongs to the class I-like SAM-binding methyltransferase superfamily. RNA M5U methyltransferase family. RlmD subfamily.

The enzyme catalyses uridine(1939) in 23S rRNA + S-adenosyl-L-methionine = 5-methyluridine(1939) in 23S rRNA + S-adenosyl-L-homocysteine + H(+). In terms of biological role, catalyzes the formation of 5-methyl-uridine at position 1939 (m5U1939) in 23S rRNA. This chain is 23S rRNA (uracil(1939)-C(5))-methyltransferase RlmD, found in Paraburkholderia xenovorans (strain LB400).